Reading from the N-terminus, the 1205-residue chain is MADSLDEFIEEQKAKLAKDKAELESDPPYMEMKGKASEKLSENSKILISMAKENIPPSSQQQPKGPLGIEYGLSLPLGEDYEQKKHKLKEELRQDYRRYLTQGITQAKRKKNFLSTGETDPSTLGVSLPIDERLSAKERLKLERNREYNQFLRGKAESTEKVRQVEKNIEPKSQRNKNPISQGKSDLPLQIQTAYTHSEGPWLSRQEEGLYRQLDGEIELRSRRPLKQTKEEVGISGAEHPSLSGSAGVPERRARRANGERVLDRQHCRADRDPGVSEDMDERFRFESDFDRRLLRVYTNGRPHGSRRGYVDGDDVPEEPNTQISAAENKSVHCNGPPRSADLDITSPFAGMLFGGEDRELTKRRKEKYRQELLEQIAEQQKKKRREKDLAFGITTSGVQDPEKSPDRLKQFSLTPRHFEEMPPERPRVAFQTPPPPFSAPSSPSVPPVHSAPSHNEDLHSGLGSTLGELAHPRVLPVPLNPPPPPLLAPPASNYRTPYDDAYYFYGARNTLDPNIVYYGSGMIGGQPAPHVSAPVTHQVAPPAVNTVGQNEQKVLSDGLRNSGLVFEDKPKPSTQSLQSYQEALQEQIREREARRKKERLEKEEYEAKLEAEMRIYNPWGKGGGGAPLRDAKGNLITDLNRMHRQNIDAYHNPDARTYEDKRAVVSIDQNLATSNAENLEDSANKNSGPLQTQSSPFARGNTFGEPLSELQIKQQELYKNFLRFQIEEKRQREEAEREKLRVAEEKEEKRLAEQRARIQQEYEEEQERRREKEEEQRLKNEELIRLAEERRKEAERKKKEEEEKHNLQLQHYYERENIIGDETKHLRQPSPVVPALQNKIASKLQRPPSVDTIISSFIHESSMSRAQSPPVPARKNQLRAEEEKKNVIMELSEMRKQLRSEERRLQGRLLHLDSDDEIPMRKRERNPMDIFDMARHRVQAPVRRPSPKGLDATTFQNIHDFNELRERDSDTRVDLRLMYPDPPRDHHTLEIQQQALLREQQKRLNRIKMRRDAGADLDTICTDNAQGRRMPRDDTNDFLKNSLLESDSAFIGAYGETYPVIEDNAFPPPSQLPSARERRRNKLKGLDFDSSRLHTPQDGLSLKSISSVNVDQVRMRNEDRMRRLTEQQKKPTNTDDEGSLVDPDDIMRHLSDDGRNSAATEPWLRPGTSESLKRFMAEHLNEEQHKGPGKPGTFTWQGLSAAHA.

2 coiled-coil regions span residues 12-34 (QKAKLAKDKAELESDPPYMEMKG) and 87-108 (KLKEELRQDYRRYLTQGITQAK). The interval 16 to 37 (LAKDKAELESDPPYMEMKGKAS) is disordered. The segment covering 158–173 (STEKVRQVEKNIEPKS) has biased composition (basic and acidic residues). Disordered regions lie at residues 158–187 (STEKVRQVEKNIEPKSQRNKNPISQGKSDL), 222–277 (SRRP…PGVS), and 380–467 (QQKK…GSTL). Polar residues predominate over residues 176–187 (NKNPISQGKSDL). 2 stretches are compositionally biased toward basic and acidic residues: residues 222 to 233 (SRRPLKQTKEEV) and 257 to 275 (ANGERVLDRQHCRADRDPG). Residues 357–391 (EDRELTKRRKEKYRQELLEQIAEQQKKKRREKDLA) are a coiled coil. 2 stretches are compositionally biased toward basic and acidic residues: residues 401-410 (DPEKSPDRLK) and 417-428 (RHFEEMPPERPR). Phosphoserine is present on Ser405. The span at 433-447 (TPPPPFSAPSSPSVP) shows a compositional bias: pro residues. A coiled-coil region spans residues 574 to 618 (STQSLQSYQEALQEQIREREARRKKERLEKEEYEAKLEAEMRIYN). The interval 677–704 (AENLEDSANKNSGPLQTQSSPFARGNTF) is disordered. Positions 685-697 (NKNSGPLQTQSSP) are enriched in polar residues. Positions 724–813 (RFQIEEKRQR…EKHNLQLQHY (90 aa)) form a coiled coil. Ser850 and Ser869 each carry phosphoserine. The interval 862–881 (SSMSRAQSPPVPARKNQLRA) is disordered. Residues 874–911 (ARKNQLRAEEEKKNVIMELSEMRKQLRSEERRLQGRLL) are a coiled coil. A Phosphoserine modification is found at Ser915. Residues 993–1014 (QQQALLREQQKRLNRIKMRRDA) are a coiled coil. Disordered stretches follow at residues 1086–1105 (GLDFDSSRLHTPQDGLSLKS), 1124–1169 (RLTE…RPGT), and 1182–1205 (NEEQHKGPGKPGTFTWQGLSAAHA). Basic and acidic residues predominate over residues 1124-1134 (RLTEQQKKPTN). Residues 1135–1145 (TDDEGSLVDPD) are compositionally biased toward acidic residues. Residues 1146–1156 (DIMRHLSDDGR) show a composition bias toward basic and acidic residues.

Interacts with PLEKHG6. Interacts with ARMC9, TOGARAM1, CCDC66, CEP104 and CEP290. Phosphorylated. Phosphorylation increases in colcemide-treated cells.

The protein localises to the cytoplasm. It is found in the cytoskeleton. Its subcellular location is the microtubule organizing center. It localises to the centrosome. The protein resides in the spindle. The protein localises to the spindle pole. It is found in the cell projection. Its subcellular location is the cilium. Its function is as follows. May play a role in cell-cycle-dependent microtubule organization. This is Centrosome and spindle pole associated protein 1 (Cspp1) from Mus musculus (Mouse).